The primary structure comprises 148 residues: uncharacterized protein (148 aa).

The next 4 membrane-spanning stretches (helical) occupy residues 29-49 (FSLV…AAKE), 61-81 (PIIL…PLVM), 99-119 (FIVF…NGFL), and 121-141 (ILVS…TLCI).

The protein localises to the cell membrane. This is an uncharacterized protein from Bacillus subtilis (strain 168).